We begin with the raw amino-acid sequence, 561 residues long: 2-succinyl-5-enolpyruvyl-6-hydroxy-3-cyclohexene-1-carboxylate synthase (561 aa).

The protein belongs to the TPP enzyme family. MenD subfamily. Homodimer. It depends on Mg(2+) as a cofactor. Mn(2+) is required as a cofactor. The cofactor is thiamine diphosphate.

The catalysed reaction is isochorismate + 2-oxoglutarate + H(+) = 5-enolpyruvoyl-6-hydroxy-2-succinyl-cyclohex-3-ene-1-carboxylate + CO2. The protein operates within quinol/quinone metabolism; 1,4-dihydroxy-2-naphthoate biosynthesis; 1,4-dihydroxy-2-naphthoate from chorismate: step 2/7. It participates in cofactor biosynthesis; phylloquinone biosynthesis. Functionally, catalyzes the thiamine diphosphate-dependent decarboxylation of 2-oxoglutarate and the subsequent addition of the resulting succinic semialdehyde-thiamine pyrophosphate anion to isochorismate to yield 2-succinyl-5-enolpyruvyl-6-hydroxy-3-cyclohexene-1-carboxylate (SEPHCHC). This is 2-succinyl-5-enolpyruvyl-6-hydroxy-3-cyclohexene-1-carboxylate synthase from Synechococcus sp. (strain CC9605).